The following is a 415-amino-acid chain: Tyrosine--tRNA ligase (415 aa).

Tyr34 contributes to the L-tyrosine binding site. Positions 39–48 (PTADSLHLGH) match the 'HIGH' region motif. Positions 164 and 168 each coordinate L-tyrosine. Positions 226-230 (KFGKS) match the 'KMSKS' region motif. Lys229 serves as a coordination point for ATP. In terms of domain architecture, S4 RNA-binding spans 348–415 (KNIVDFLVDG…KKKYFLGKIK (68 aa)).

Belongs to the class-I aminoacyl-tRNA synthetase family. TyrS type 1 subfamily. Homodimer.

Its subcellular location is the cytoplasm. It carries out the reaction tRNA(Tyr) + L-tyrosine + ATP = L-tyrosyl-tRNA(Tyr) + AMP + diphosphate + H(+). Catalyzes the attachment of tyrosine to tRNA(Tyr) in a two-step reaction: tyrosine is first activated by ATP to form Tyr-AMP and then transferred to the acceptor end of tRNA(Tyr). This Leuconostoc citreum (strain KM20) protein is Tyrosine--tRNA ligase.